A 446-amino-acid chain; its full sequence is tRNA modification GTPase MnmE (446 aa).

The (6S)-5-formyl-5,6,7,8-tetrahydrofolate site is built by arginine 21, glutamate 77, and lysine 116. A TrmE-type G domain is found at 212 to 370 (GFRIALIGAP…LRAALASHVA (159 aa)). Residue asparagine 222 coordinates K(+). Residues 222 to 227 (NAGKST), 241 to 247 (TDVAGTT), and 266 to 269 (DTAG) contribute to the GTP site. Residue serine 226 participates in Mg(2+) binding. 3 residues coordinate K(+): threonine 241, valine 243, and threonine 246. Threonine 247 lines the Mg(2+) pocket. A (6S)-5-formyl-5,6,7,8-tetrahydrofolate-binding site is contributed by lysine 446.

It belongs to the TRAFAC class TrmE-Era-EngA-EngB-Septin-like GTPase superfamily. TrmE GTPase family. In terms of assembly, homodimer. Heterotetramer of two MnmE and two MnmG subunits. The cofactor is K(+).

It is found in the cytoplasm. Functionally, exhibits a very high intrinsic GTPase hydrolysis rate. Involved in the addition of a carboxymethylaminomethyl (cmnm) group at the wobble position (U34) of certain tRNAs, forming tRNA-cmnm(5)s(2)U34. This is tRNA modification GTPase MnmE from Caulobacter vibrioides (strain ATCC 19089 / CIP 103742 / CB 15) (Caulobacter crescentus).